A 1860-amino-acid chain; its full sequence is Collagen alpha-1(XXVII) chain (1860 aa).

The first 41 residues, 1–41, serve as a signal peptide directing secretion; sequence MGAGSARGARGTAAAAAARGGGFLFSWILVSFACHLASTQG. A propeptide spans 42–624 (N-terminal propeptide); the sequence is APEDVDILQR…AGSTPFPLLM (583 aa). Positions 71-236 constitute a Laminin G-like domain; that stretch reads QSGFIFTQRA…NYCTHLRKQC (166 aa). A glycan (N-linked (GlcNAc...) asparagine) is linked at Asn271. Disordered stretches follow at residues 278–608, 625–772, and 851–1625; these read ALGS…TSSG, GPPG…GSDG, and LKGD…IQLQ. 2 stretches are compositionally biased toward polar residues: residues 298-309 and 386-409; these read TKPQRTSPTNPH and HPTQ…QVPP. Over residues 432–445 the composition is skewed to pro residues; it reads MPRPPPPSTRPLPP. 2 stretches are compositionally biased toward low complexity: residues 446 to 457 and 485 to 505; these read TTSSSKKPIPTL and TALS…RPPA. Residues 509 to 518 show a composition bias toward polar residues; it reads PPTSGTSTPR. Low complexity-rich tracts occupy residues 572–588 and 599–608; these read TTRP…QTTP and SSSPRPTSSG. Collagen-like domains follow at residues 625–679, 688–747, 748–807, 808–867, 871–930, 931–990, 1003–1062, 1066–1125, 1126–1185, 1192–1251, 1258–1317, 1318–1378, 1382–1441, 1442–1501, 1502–1561, and 1562–1621; these read GPPG…GDPG, GAKG…PGPV, GDPG…DGNP, GELG…SGDP, GDKG…KGKP, GARG…PGPV, GEPG…RGAK, GPRG…PGTK, GLPG…IGQR, GDSG…QGEK, GAKG…KGIV, GPLG…RGKP, GQPG…EGIA, GPDG…PGQL, GPPG…QGPR, and GPPG…PGGP. A triple-helical region region spans residues 625-1618; the sequence is GPPGPKGDCG…RGRPGPPGPP (994 aa). Residues 654-669 show a composition bias toward pro residues; it reads RGPPGPYGNPGLPGPP. The segment covering 714–734 has biased composition (low complexity); sequence PGPAGHPGEQGQPGPEGSPGA. Low complexity-rich tracts occupy residues 911-924 and 932-944; these read FPGD…NGPE and ARGL…QLGP. Residues 1033 to 1042 are compositionally biased toward gly residues; that stretch reads GMPGGMGTPG. Pro residues predominate over residues 1043 to 1053; that stretch reads EPGPQGPPGSR. Positions 1130 to 1142 are enriched in pro residues; the sequence is EPGPQGPQGPIGP. Composition is skewed to basic and acidic residues over residues 1202–1220 and 1241–1253; these read LKGD…EKGQ and PEGK…EKGR. Composition is skewed to basic and acidic residues over residues 1326-1338 and 1350-1360; these read KGEK…DGKA and PVGDRGDRGEP. Low complexity predominate over residues 1449–1458; the sequence is RDGQAGQQGE. Low complexity predominate over residues 1572 to 1587; sequence IVGPLGILGPSGLPGP. The segment covering 1603–1620 has biased composition (pro residues); sequence RGPPGPRGRPGPPGPPGG. A propeptide spans 1622–1860 (C-terminal propeptide); that stretch reads IQLQQDDLGA…RLEVGPACFL (239 aa). Residues 1660-1860 enclose the Fibrillar collagen NC1 domain; the sequence is GEIFKTLHYL…RLEVGPACFL (201 aa). 3 disulfides stabilise this stretch: Cys1690/Cys1722, Cys1731/Cys1858, and Cys1767/Cys1811. Asp1708, Asn1710, Cys1713, and Asp1716 together coordinate Ca(2+). Residue Asn1769 is glycosylated (N-linked (GlcNAc...) asparagine).

It belongs to the fibrillar collagen family.

The protein resides in the secreted. Its subcellular location is the extracellular space. It is found in the extracellular matrix. Functionally, plays a role during the calcification of cartilage and the transition of cartilage to bone. This is Collagen alpha-1(XXVII) chain (COL27A1) from Homo sapiens (Human).